The following is an 84-amino-acid chain: Three-finger toxin MALT0070C (84 aa).

A signal peptide spans 1 to 21 (MKTLLLTLVVVTIVCLDLGYT). Intrachain disulfides connect Cys24-Cys43, Cys36-Cys60, Cys64-Cys71, and Cys72-Cys77.

This sequence belongs to the three-finger toxin family. Short-chain subfamily. As to expression, expressed by the venom gland.

It localises to the secreted. This is Three-finger toxin MALT0070C from Micrurus altirostris (Uruguayan coral snake).